We begin with the raw amino-acid sequence, 1332 residues long: DNA-directed RNA polymerase subunit beta' (1332 aa).

Zn(2+)-binding residues include C60, C62, C75, and C78. Mg(2+) is bound by residues D535, D537, and D539. Residues C894, C977, C984, and C987 each contribute to the Zn(2+) site.

This sequence belongs to the RNA polymerase beta' chain family. In terms of assembly, the RNAP catalytic core consists of 2 alpha, 1 beta, 1 beta' and 1 omega subunit. When a sigma factor is associated with the core the holoenzyme is formed, which can initiate transcription. Mg(2+) is required as a cofactor. It depends on Zn(2+) as a cofactor.

The catalysed reaction is RNA(n) + a ribonucleoside 5'-triphosphate = RNA(n+1) + diphosphate. Its function is as follows. DNA-dependent RNA polymerase catalyzes the transcription of DNA into RNA using the four ribonucleoside triphosphates as substrates. This is DNA-directed RNA polymerase subunit beta' from Corynebacterium kroppenstedtii (strain DSM 44385 / JCM 11950 / CIP 105744 / CCUG 35717).